We begin with the raw amino-acid sequence, 1041 residues long: Nuclear migration protein unc-83 (1041 aa).

Disordered stretches follow at residues Val-258–Val-283, Ile-453–Asp-498, and Ile-613–Ser-646. Positions Gln-456 to Arg-465 are enriched in basic residues. The segment covering Ile-613–Asp-626 has biased composition (basic and acidic residues). Coiled-coil stretches lie at residues Arg-785 to Ala-816 and Lys-931 to Met-951. Positions Thr-986–Val-1041 constitute a KASH domain. A helical; Anchor for type IV membrane protein transmembrane segment spans residues Phe-1005 to Phe-1024.

As to quaternary structure, component of the unc-83-unc-84 LINC complex which contains at least unc-83 and unc-84. Within the unc-83-unc-84 LINC complex interacts with unc-84 (via C-terminus); the interaction is probably required to recruit unc-83 to the nuclear envelope where it then recruits dynein and kinesin-1 complexes to regulate nuclear migration. Interacts with bicd-1 and dlc-1. Interacts with nud-2 (via C-terminus); the interaction is direct, and is required for recruitment of nud-2 to the nuclear envelope. Interacts with klc-2; the interaction is direct. As to expression, predominantly expressed in migratory nuclei. Expressed in a variety of cell-types, including cells around the pharynx and in the uterus.

The protein resides in the nucleus membrane. It localises to the nucleus outer membrane. Cargo-specific adapter that is involved in nuclear migration during development and thereafter. Component of the unc-83-unc-84 LINC (LInker of Nucleoskeleton and Cytoskeleton) complex where it interacts with unc-84 to form a bridge connecting the nuclear envelope to the cytoskeleton which allows for nuclear transport along microtubules. Within the complex, connects the nuclear envelope to the microtubule cytoskeleton through the kinesin-1 light chain protein klc-2 (most likely within the Kinesin 1 motor complex) to regulate nuclear migrations. Moreover, within the complex, also recruits the large microtubule-associated bicd-1-dlc-1-egal-1 and lis-1-nud-2 complexes to the nuclear envelope to regulate both the bidirectional migration of nuclei and the extent of nuclear migrations. Not required for centrosome attachment to the nucleus. The chain is Nuclear migration protein unc-83 from Caenorhabditis elegans.